The chain runs to 127 residues: Large ribosomal subunit protein bL17 (127 aa).

This sequence belongs to the bacterial ribosomal protein bL17 family. As to quaternary structure, part of the 50S ribosomal subunit. Contacts protein L32.

This is Large ribosomal subunit protein bL17 from Lactiplantibacillus plantarum (strain ATCC BAA-793 / NCIMB 8826 / WCFS1) (Lactobacillus plantarum).